The primary structure comprises 839 residues: Dynein axonemal assembly factor 5 (839 aa).

11 HEAT repeats span residues 10–48, 54–92, 94–137, 140–178, 181–219, 221–257, 259–297, 578–617, 675–713, 717–755, and 723–761; these read TSDV…DEKL, QHVF…HVPR, EEAL…VCGK, APYL…CIPE, HMQA…YSSG, SVDD…KLQD, YSFF…QWEK, GETL…KASE, LQVE…TCER, PDKL…CITD, and IYPE…ERTT.

Belongs to the DNAAF5 family. Interacts with DNAI2; probably involved in outer arm dynein assembly.

The protein localises to the cytoplasm. It localises to the dynein axonemal particle. Cytoplasmic protein involved in the delivery of the dynein machinery to the motile cilium. It is required for the assembly of the axonemal dynein inner and outer arms, two structures attached to the peripheral outer doublet A microtubule of the axoneme, that play a crucial role in cilium motility. In Xenopus laevis (African clawed frog), this protein is Dynein axonemal assembly factor 5.